The sequence spans 222 residues: uncharacterized protein (222 aa).

The stretch at 43 to 73 forms a coiled coil; sequence SQNEEFEYEMERMLSILNEQTMDLTQLQSRI.

This is an uncharacterized protein from Rickettsia conorii (strain ATCC VR-613 / Malish 7).